Consider the following 160-residue polypeptide: SsrA-binding protein (160 aa).

Belongs to the SmpB family.

It localises to the cytoplasm. Functionally, required for rescue of stalled ribosomes mediated by trans-translation. Binds to transfer-messenger RNA (tmRNA), required for stable association of tmRNA with ribosomes. tmRNA and SmpB together mimic tRNA shape, replacing the anticodon stem-loop with SmpB. tmRNA is encoded by the ssrA gene; the 2 termini fold to resemble tRNA(Ala) and it encodes a 'tag peptide', a short internal open reading frame. During trans-translation Ala-aminoacylated tmRNA acts like a tRNA, entering the A-site of stalled ribosomes, displacing the stalled mRNA. The ribosome then switches to translate the ORF on the tmRNA; the nascent peptide is terminated with the 'tag peptide' encoded by the tmRNA and targeted for degradation. The ribosome is freed to recommence translation, which seems to be the essential function of trans-translation. This is SsrA-binding protein from Cronobacter sakazakii (strain ATCC BAA-894) (Enterobacter sakazakii).